The sequence spans 258 residues: MAARVAAVRAAAWLLLGAATGLTRGPAAAFTAARSDAGIRAMCSEIILRQEVLKDGFHRDLLIKVKFGESIEDLHTCRLLIKQDIPAGLYVDPYELASLRERNITEAVMVSENFDIEAPNYLSKESEVLIYARRDSQCIDCFQAFLPVHCRYHRPHSEDGEASIVVNNPDLLMFCDQEFPILKCWAHSEVAAPCALENEDICQWNKMKYKSVYKNVILQVPVGLTVHTSLVCSVTLLITILCSTLILVAVFKYGHFSL.

A signal peptide spans 1 to 21 (MAARVAAVRAAAWLLLGAATG). The Lumenal segment spans residues 22-230 (LTRGPAAAFT…PVGLTVHTSL (209 aa)). Residue Asn103 is glycosylated (N-linked (GlcNAc...) asparagine). The chain crosses the membrane as a helical span at residues 231–251 (VCSVTLLITILCSTLILVAVF). Residues 252–258 (KYGHFSL) lie on the Cytoplasmic side of the membrane.

It belongs to the PIGX family. Part of the glycosylphosphatidylinositol-mannosyltransferase I complex that is composed of PIGM and PIGX. Interacts with PIGM; PIGX stabilizes PIGM.

The protein resides in the endoplasmic reticulum membrane. It functions in the pathway glycolipid biosynthesis; glycosylphosphatidylinositol-anchor biosynthesis. Functionally, stabilizing subunit of the glycosylphosphatidylinositol-mannosyltransferase I complex which catalyzes the transfer of the first mannose, via an alpha-1,4 bond from a dolichol-phosphate-mannose (Dol-P-Man) to the glucosaminyl acyl phosphatidylinositol (GlcN-(acyl)PI) intermediate to generate alpha-D-Man-(1-&gt;4)-alpha-D-GlcN-(1-&gt;6)-(1-radyl,2-acyl-sn-glycero-3-phospho)-2-acyl-inositol and participates in the sixth step of the glycosylphosphatidylinositol-anchor biosynthesis. Probably acts by stabilizing the mannosyltransferase PIGM. In Homo sapiens (Human), this protein is GPI alpha-1,4-mannosyltransferase I, stabilizing subunit.